A 304-amino-acid polypeptide reads, in one-letter code: L-threonate dehydrogenase (304 aa).

NAD(+) contacts are provided by residues 7-35 (YAVA…TYGV) and Thr102. Lys178 is an active-site residue. An NAD(+)-binding site is contributed by Lys246.

The protein belongs to the HIBADH-related family. L-threonate dehydrogenase subfamily.

The enzyme catalyses L-threonate + NAD(+) = 2-dehydro-L-erythronate + NADH + H(+). Catalyzes oxidation of L-threonate to 2-oxo-tetronate. Can use either NAD(+) or NADP(+) as cosubstrate, with a preference for NAD(+). In Pectobacterium atrosepticum (strain SCRI 1043 / ATCC BAA-672) (Erwinia carotovora subsp. atroseptica), this protein is L-threonate dehydrogenase.